A 429-amino-acid polypeptide reads, in one-letter code: Small ribosomal subunit protein mS47 (429 aa).

Residues Glu-141, Gly-166, Glu-189, and Asp-197 each coordinate substrate.

Belongs to the enoyl-CoA hydratase/isomerase family. Mitochondrion-specific ribosomal protein mS47 subfamily. As to quaternary structure, component of the mitochondrial small ribosomal subunit (mt-SSU). Mature yeast 74S mitochondrial ribosomes consist of a small (37S) and a large (54S) subunit. The 37S small subunit contains a 15S ribosomal RNA (15S mt-rRNA) and at least 32 different proteins. The 54S large subunit contains a 21S rRNA (21S mt-rRNA) and at least 45 different proteins. mS47/snr1 forms a protuberance of the yeast mitoribosome and retains a solvent-exposed cavity likely capable of accommodating a substrate, in accordance with it being an active enzyme as well as an integral constituent of the mitoribosome.

It localises to the mitochondrion. It catalyses the reaction 3-hydroxy-2-methylpropanoyl-CoA + H2O = 3-hydroxy-2-methylpropanoate + CoA + H(+). Its pathway is amino-acid degradation; L-valine degradation. Component of the mitochondrial ribosome (mitoribosome), a dedicated translation machinery responsible for the synthesis of mitochondrial genome-encoded proteins, including at least some of the essential transmembrane subunits of the mitochondrial respiratory chain. The mitoribosomes are attached to the mitochondrial inner membrane and translation products are cotranslationally integrated into the membrane. mS47/snr1 has enzymatic activity in vitro, and is able to catalyze the specific hydrolysis of 3-hydroxyisobutyryl-CoA (HIBYL-CoA). However, because the turnover rate of mS47/snr1 is only a fraction of that of the homologous mammalian enzyme, the physiological function of this activity remains unclear. Has an indirect role in endocytic membrane trafficking. This chain is Small ribosomal subunit protein mS47 (snr1), found in Schizosaccharomyces pombe (strain 972 / ATCC 24843) (Fission yeast).